The primary structure comprises 209 residues: 3-hexulose-6-phosphate synthase (209 aa).

Belongs to the HPS/KGPDC family. HPS subfamily. As to quaternary structure, homodimer.

It catalyses the reaction D-ribulose 5-phosphate + formaldehyde = D-arabino-hex-3-ulose 6-phosphate. It functions in the pathway one-carbon metabolism; formaldehyde assimilation via RuMP pathway; D-fructose 6-phosphate from D-ribulose 5-phosphate and formaldehyde: step 1/2. Functionally, catalyzes the condensation of ribulose 5-phosphate with formaldehyde to form 3-hexulose 6-phosphate. The polypeptide is 3-hexulose-6-phosphate synthase (rmpA) (Methylomonas aminofaciens).